Reading from the N-terminus, the 209-residue chain is Dual specificity protein phosphatase 22 (209 aa).

A Tyrosine-protein phosphatase domain is found at 4–144; the sequence is GMNKILPSLF…LEDFGKHDVY (141 aa). The active-site Phosphocysteine intermediate is the C88. The segment at 170 to 193 is disordered; the sequence is DKHKQQEAAESQSATSSGRQWSSH. The segment covering 177–193 has biased composition (low complexity); that stretch reads AAESQSATSSGRQWSSH.

This sequence belongs to the protein-tyrosine phosphatase family. Non-receptor class dual specificity subfamily.

The protein resides in the cytoplasm. It is found in the nucleus. It carries out the reaction O-phospho-L-tyrosyl-[protein] + H2O = L-tyrosyl-[protein] + phosphate. It catalyses the reaction O-phospho-L-seryl-[protein] + H2O = L-seryl-[protein] + phosphate. The enzyme catalyses O-phospho-L-threonyl-[protein] + H2O = L-threonyl-[protein] + phosphate. Its function is as follows. Activates the Jnk signaling pathway. Dephosphorylates and deactivates p38 and stress-activated protein kinase/c-Jun N-terminal kinase (SAPK/JNK). This chain is Dual specificity protein phosphatase 22 (dusp22), found in Xenopus tropicalis (Western clawed frog).